The sequence spans 594 residues: MSGRIEYIAGPVVKADLPGAKLYELVFVGEIKLFGEVVRVQGDKAFIQVYEDTTGLRPGEPVVRSGEPLSAWLGPTIIGKIYDGVQRPLKNIEEISKSPFIARGIGYDQAPPLDLKAEFDFKPAVKPGEEVSPGDVLGSVKETELMTHYILYPPLPENAPGVVEWVADGKYKVDDVIARIKTKRGIVEVKMWHKWPVRRPRPFREKLPPVEPLITGVRTIDTMFPIAKGGAAAVPGPFGSGKTVTIRTLSMFAQSRFIIPVLCGERGNEAADALHGLLKLKDPTTGRSLLERTTIIVNTSNMPVAAREASVYMGTTLGEYFRDQGYDVLVLADSTSRWAEAMREVALRIGEMPSEEGYPAYLPTRLAEFYERAGRVVLIGSKERVGSLTIAASVSPPGGDFTEPVTSNTLRFIGAFWPLSPRLAYSRHYPAIDWLAAFSRYVDTVEVWWSKNISTEWRRIRDTLQSLLVKEAELQEIVRILGTEALSEYEKHVLNVAFMIREGFLKQDAFNPVDTPSSPIKQFLLMKAIYAYYEEGMKAIEAGVPAAVLRELETVKRLPRLRMEVTNDVAKEELTKFIESLVSEIRSVLAARKQ.

236–243 (GPFGSGKT) is a binding site for ATP.

Belongs to the ATPase alpha/beta chains family. In terms of assembly, has multiple subunits with at least A(3), B(3), C, D, E, F, H, I and proteolipid K(x).

It is found in the cell membrane. The catalysed reaction is ATP + H2O + 4 H(+)(in) = ADP + phosphate + 5 H(+)(out). Component of the A-type ATP synthase that produces ATP from ADP in the presence of a proton gradient across the membrane. The A chain is the catalytic subunit. The sequence is that of A-type ATP synthase subunit A from Pyrobaculum neutrophilum (strain DSM 2338 / JCM 9278 / NBRC 100436 / V24Sta) (Thermoproteus neutrophilus).